The primary structure comprises 517 residues: Shugoshin 1 (517 aa).

Residues 1–89 adopt a coiled-coil conformation; that stretch reads MAKERCQKRS…DVILQLRKEC (89 aa). Residues 1-176 form a necessary for interaction with PPP2CA and PPP2R1A region; sequence MAKERCQKRS…DFDSGKVEST (176 aa). 4 disordered regions span residues 107–136, 149–173, 267–317, and 334–427; these read QSEETTQNWKGRPSDVVSSIDNTTRDLSGK, PYQTTEPSPAVTPETQGCDFDSGKV, PEQI…TLDG, and HPTP…QESP. Residues 268–291 adopt a coiled-coil conformation; that stretch reads EQIESKHKRARKRRAEQRRTKQRC. Positions 273–302 are enriched in basic residues; that stretch reads KHKRARKRRAEQRRTKQRCKSKSSLRSKGN. Residues 341–363 are compositionally biased toward polar residues; it reads KMNNGCNKETDSSNSEVSDLECS. Residues 379 to 390 are compositionally biased toward basic and acidic residues; that stretch reads RLRDYRESERAV. Ser-426 carries the phosphoserine modification. A PXVXL/I motif motif is present at residues 441–445; it reads PRVKI. Residues 447-455 carry the D-box motif; that stretch reads KPSLPPKRR. Residue Ser-497 is modified to Phosphoserine; by NEK2.

Belongs to the shugoshin family. In terms of assembly, interacts with PPP2CA (or PPP2CB), PPP2R1B, PPP2R5A, PPP2R5B, PPP2R5C, PPP2R5D, PPP2R5E, SET, LRRC59, RBM10 (or RBM5), RPL10A, RPL28, RPL7, RPL7A and RPLP1. Interaction with protein phosphatase 2A occurs most probably through direct binding to the regulatory B56 subunits: PPP2R1B, PPP2R5A, PPP2R5B, PPP2R5C, PPP2R5D, PPP2R5E. Interacts with PPP2R1A and NEK2. Interacts with CDCA8. In terms of processing, ubiquitinated and degraded during mitotic exit by APC/C-Cdh1. Phosphorylation by NEK2 is essential for chromosome congression in mitosis and for the proper attachment of spindle microtubule to the kinetochore. Phosphorylated by PLK1 and AUKRB. As to expression, ubiquitously expressed in proliferating cells. Moderately expressed in the oocytes.

Its subcellular location is the nucleus. It localises to the chromosome. The protein localises to the centromere. It is found in the kinetochore. The protein resides in the cytoplasm. Its subcellular location is the cytoskeleton. It localises to the spindle pole. The protein localises to the microtubule organizing center. It is found in the centrosome. The protein resides in the nucleus speckle. Plays a central role in chromosome cohesion during mitosis by preventing premature dissociation of cohesin complex from centromeres after prophase, when most of cohesin complex dissociates from chromosomes arms. May act by preventing phosphorylation of the STAG2 subunit of cohesin complex at the centromere, ensuring cohesin persistence at centromere until cohesin cleavage by ESPL1/separase at anaphase. Essential for proper chromosome segregation during mitosis and this function requires interaction with PPP2R1A. Its phosphorylated form is necessary for chromosome congression and for the proper attachment of spindle microtubule to the kinetochore. Necessary for kinetochore localization of PLK1 and CENPF. May play a role in the tension sensing mechanism of the spindle-assembly checkpoint by regulating PLK1 kinetochore affinity. Involved in centromeric enrichment of AUKRB in prometaphase. The polypeptide is Shugoshin 1 (Mus musculus (Mouse)).